An 844-amino-acid chain; its full sequence is Bifunctional abietadiene synthase, chloroplastic (844 aa).

The transit peptide at 1–46 (QSIPHFSTTLNAGSSARKRRSLYLRWGKGSNKIIACVGEGATSVPY) directs the protein to the chloroplast. Lys-245 is a substrate binding site. Mg(2+)-binding residues include Asp-378 and Asp-380. The DXDD motif signature appears at 378–381 (DIDD). Lys-465 contacts substrate. 5 residues coordinate Mg(2+): Asp-597, Asp-601, Asn-741, Thr-745, and Glu-749. The DDXXD motif motif lies at 597–601 (DDLYD).

Belongs to the terpene synthase family. Tpsd subfamily. Monomer. It depends on Mg(2+) as a cofactor.

The protein resides in the plastid. It is found in the chloroplast. It catalyses the reaction (2E,6E,10E)-geranylgeranyl diphosphate = (+)-copalyl diphosphate. It carries out the reaction (+)-copalyl diphosphate = abieta-7,13-diene + diphosphate. The catalysed reaction is (+)-copalyl diphosphate = neoabietadiene + diphosphate. The enzyme catalyses (+)-copalyl diphosphate = abieta-8(14),12-diene + diphosphate. The protein operates within terpene metabolism; oleoresin biosynthesis. In terms of biological role, involved in defensive oleoresin formation in conifers in response to insect attack or other injury. Involved in diterpene (C20) olefins biosynthesis. Bifunctional enzyme that catalyzes two sequential cyclizations of geranylgeranyl diphosphate (GGPP) to abietadiene. The copalyl diphosphate (CPP) intermediate diffuses freely between the 2 active sites in the enzyme. This Abies balsamea (Balsam fir) protein is Bifunctional abietadiene synthase, chloroplastic (LAS).